The following is a 152-amino-acid chain: MTTQTQYDLVPANGSEFELSVTQVPDEQHIRFWPQHFGTIPQWITLEPRIFAWMDRFCDEYCGGIWSFYTLSNGGAFMAPDADGDDKWHLLNGMNGNGAEMSAEAAGIAVCLIEYSHHACLTECDAMTEHYYRLRDYALQHPESSAIMRIID.

Belongs to the antirestriction protein family.

This is an uncharacterized protein from Escherichia coli (strain K12).